Here is a 433-residue protein sequence, read N- to C-terminus: ATP-dependent protease ATPase subunit HslU (433 aa).

ATP-binding positions include Val-18, 60–65 (GVGKTE), Asp-246, Glu-311, and Arg-383.

It belongs to the ClpX chaperone family. HslU subfamily. A double ring-shaped homohexamer of HslV is capped on each side by a ring-shaped HslU homohexamer. The assembly of the HslU/HslV complex is dependent on binding of ATP.

It is found in the cytoplasm. Functionally, ATPase subunit of a proteasome-like degradation complex; this subunit has chaperone activity. The binding of ATP and its subsequent hydrolysis by HslU are essential for unfolding of protein substrates subsequently hydrolyzed by HslV. HslU recognizes the N-terminal part of its protein substrates and unfolds these before they are guided to HslV for hydrolysis. This is ATP-dependent protease ATPase subunit HslU from Rhodopseudomonas palustris (strain BisB5).